The primary structure comprises 699 residues: Polyribonucleotide nucleotidyltransferase (699 aa).

Mg(2+) is bound by residues aspartate 485 and aspartate 491. Positions 552–611 (PRITTIKINPEKIRDVIGKGGAVIRALTEETGTTIELEDDGTVKIASSNGEATKEAIRRI) constitute a KH domain. Positions 621 to 689 (GRIYNGKVIR…RQGRVRLSIK (69 aa)) constitute an S1 motif domain.

This sequence belongs to the polyribonucleotide nucleotidyltransferase family. As to quaternary structure, component of the RNA degradosome, which is a multiprotein complex involved in RNA processing and mRNA degradation. It depends on Mg(2+) as a cofactor.

It is found in the cytoplasm. It carries out the reaction RNA(n+1) + phosphate = RNA(n) + a ribonucleoside 5'-diphosphate. In terms of biological role, involved in mRNA degradation. Catalyzes the phosphorolysis of single-stranded polyribonucleotides processively in the 3'- to 5'-direction. This is Polyribonucleotide nucleotidyltransferase from Shewanella oneidensis (strain ATCC 700550 / JCM 31522 / CIP 106686 / LMG 19005 / NCIMB 14063 / MR-1).